The chain runs to 379 residues: tRNA-specific 2-thiouridylase MnmA (379 aa).

ATP contacts are provided by residues Ala-6–Ser-13 and Leu-32. Cys-101 serves as the catalytic Nucleophile. Cys-101 and Cys-199 are oxidised to a cystine. Position 125 (Gly-125) interacts with ATP. The interval Lys-148–Gln-150 is interaction with tRNA. The active-site Cysteine persulfide intermediate is Cys-199.

The protein belongs to the MnmA/TRMU family.

It localises to the cytoplasm. The catalysed reaction is S-sulfanyl-L-cysteinyl-[protein] + uridine(34) in tRNA + AH2 + ATP = 2-thiouridine(34) in tRNA + L-cysteinyl-[protein] + A + AMP + diphosphate + H(+). Functionally, catalyzes the 2-thiolation of uridine at the wobble position (U34) of tRNA, leading to the formation of s(2)U34. This Arthrobacter sp. (strain FB24) protein is tRNA-specific 2-thiouridylase MnmA.